The sequence spans 341 residues: NADH-quinone oxidoreductase subunit H 2 (341 aa).

8 helical membrane-spanning segments follow: residues 13-33 (IIVI…IAYI), 82-102 (GVFL…WAVI), 115-135 (VGVL…IMAG), 161-181 (IGFV…TAIV), 190-210 (MLGW…VSAL), 248-268 (YVAI…GWLP), 277-297 (WVPG…LFAM), and 317-337 (VFLP…QFAG).

The protein belongs to the complex I subunit 1 family. As to quaternary structure, NDH-1 is composed of 14 different subunits. Subunits NuoA, H, J, K, L, M, N constitute the membrane sector of the complex.

It is found in the cell inner membrane. It catalyses the reaction a quinone + NADH + 5 H(+)(in) = a quinol + NAD(+) + 4 H(+)(out). NDH-1 shuttles electrons from NADH, via FMN and iron-sulfur (Fe-S) centers, to quinones in the respiratory chain. The immediate electron acceptor for the enzyme in this species is believed to be ubiquinone. Couples the redox reaction to proton translocation (for every two electrons transferred, four hydrogen ions are translocated across the cytoplasmic membrane), and thus conserves the redox energy in a proton gradient. This subunit may bind ubiquinone. This is NADH-quinone oxidoreductase subunit H 2 from Rhodopseudomonas palustris (strain BisB5).